The sequence spans 371 residues: O-phospho-L-seryl-tRNA:Cys-tRNA synthase 1 (371 aa).

Residues 78–79 (AR), Asn-183, and 206–208 (SGH) contribute to the pyridoxal 5'-phosphate site. N6-(pyridoxal phosphate)lysine is present on Lys-209.

Belongs to the SepCysS family. In terms of assembly, homodimer. Probably interacts with SepRS. It depends on pyridoxal 5'-phosphate as a cofactor.

The enzyme catalyses O-phospho-L-seryl-tRNA(Cys) + hydrogen sulfide + H(+) = L-cysteinyl-tRNA(Cys) + phosphate. In terms of biological role, converts O-phospho-L-seryl-tRNA(Cys) (Sep-tRNA(Cys)) to L-cysteinyl-tRNA(Cys) (Cys-tRNA(Cys)). The polypeptide is O-phospho-L-seryl-tRNA:Cys-tRNA synthase 1 (Archaeoglobus fulgidus (strain ATCC 49558 / DSM 4304 / JCM 9628 / NBRC 100126 / VC-16)).